We begin with the raw amino-acid sequence, 132 residues long: Large ribosomal subunit protein bL17 (132 aa).

Belongs to the bacterial ribosomal protein bL17 family. In terms of assembly, part of the 50S ribosomal subunit. Contacts protein L32.

The protein is Large ribosomal subunit protein bL17 of Shewanella sediminis (strain HAW-EB3).